Here is a 2527-residue protein sequence, read N- to C-terminus: MIAPVNAGDTDASEPGDLGVMPIAIIGMACRFPGDASNPEKLWNLCAKGKSAWSPIPESRFHAESWYHPDKGHLGTSYVKGAHFLTEDISRFDAAFFNCTAESASTMDPEVRMQLETVYEALESAGLPLDQVAGSRTGVYAGTCFRDNHDSLMRDPDTLARFFLTGNGAAMIANRISHFFDLRGPSLMVDTGCSTTLTLLHLACQSVRAGESEMAIVGGSNVLLNPDMFIAGSNLSLLSEAGRCFAFDSRAAGYGRGDGIASIVIKPLAAALRDGDPVRAVIRNSAANQDGKTATLTSPSQDAQEELMRECYDMAGLDPRDTSYVEAHGTGTQVGDTIEAHAIGHVFGAGRSSESPLVIGSVKTNIGHTEAASGLAGVIKVVMAMEKRAIPPHMNFESPNEKISLEGLKLKIPLSLQEWPSPLLQRASINNFGYGGANAHVIVESPQSMLLPLTPSSSEMGNTPNPKKRSRVFLLSAKDPAAARSMGENLYDYVATTLENSRENEEQILDQLAFTLGQRRTRFAWTTAWSGSSLADVHARLGSARSTAERSTRAPRVGMVFTGQGAQWFAMGRELFSAYPVFYDTMHEIDACLKNMGATWSAVEELQRDAKESRINQVTFSLPLSVAIQLALVDLLRSWGIRPAGVTGHSSGEVGAAYAAGAITLAGAMAIVYTRGDLTSQFQKLLDRRGGMVAVGLGREEAEKALAEVQSGTAVIACVNSPSSVTISGDECAVEEVEAMLTARGVFARRLRVEAAYHSHHMLPLAEAYRVLLSRFLEPNTEFDSTVVYSSPTTGDRMTSAADIAHPDHWVRNMVQPVEFLNSLRNLCSGAAPARTSTSTAVDMLVEVGPHGALAGPIRQTLALPELKDAGITYASCLSRGQDAVQTIHQLICTLLQAGYPVDLEAVNFPYGRSDVQVLTNLPPYPWNHETSYWAEPRRNKELRARTVAPHDLLGVPAAGSTPTTPAWRHVVRPRDIPWVRDHIVQGAIVYPGAGYVSMVVEALRQLQTPDNPSHGYQLQDVQIRNPLILEDTAEGVDVQLSLHPCGDRVRHAQGWYEFLIQSVNQTGDLWTLHCEGLCCTPSPAQGTGWAGPPAPVNAPSFTVPASAWRILNPADTYKTLHEVGVCHGPIFQNLMSAQSAPGHSQSVFQVADSAATMPQGYQQSHVIHPITLDAVFQAVYHNLPAGGTQQRTAMIPTSIQNLYISAKLITSPGHQFRADSTLMKISGQGFESSVRVINNAGTDEANEPPTPVLTLDGLFCQSLGSSAVVLTPDDKLCYTSVWAPDFDFLQPEHLLRKAEGAHQHSFSELQAAAVVFINDALQEFENEQVVAAEHQSYWDWMKGVVDQARPTLDLAGVTAQYMAALTEDLKQGVDGRLLCRFGERLPEILSGLVPAKEILRDFLVEDQAEWSSVSEYLEPFMSSLMKLHGHKRPRATVLEIGTGNVASTRMFAKALTRNDTQLFARYDVTAPSTGLVEVASKALRDDTRAECKVLDLDTPAGDQGFTRASYDLLILSASALLAAEDVVQSLTSLRALLAPGGKCILWGPTLGDSALQTIVRLLPRWSGVINATPTWQRLLAKAGFEPSNFQLEEGLNSSGYQGEVVIATAKADTTIYSAVKVVLVSGTSPPEEWQQTLQHSLPADVVSGISVVSSLEDVDVEDKVCLILEEFVQPILENPSEEQFYDLQRVLGSSRATVWVSRGAQGDAEDPRGSLHQGLLRTLRCENILRQYVSVDLDPNAPVWSSSSATQIAWILSNMLITSSFHLPETEYAIRNSVVQISRVYGDEQEAQLVGTTKPQNPELRPWSTPGQNIRLGVATPGLLNSLVFTEDPTIEETLPDDWVEIEPRAFGLNFRDIMVALGQLDETRMGFECSGVITRVGQSAQAAGFCPGQGVYAFIIGYFATKVRIPFTSVASIPAGMDFATAASIPLVFITAYHALVDLARLQRDETVLIHSGTGGVGQAAIMLAQSIGADIFVTVGSEDKREFLMRQYGIPSSRIFSSRNPSFAQHIMSETDGKGVDVVLNSLAGPLLRETWRCVGMFGRFIEIGKRDIEQNSMVEMGPFVRSTLFASLDLITLGEQRGKEVQRIFAAINELLADGEIRPVGPITRFGIGEVEKAFRTMQTGKHMGKIVLEPRPGDQVRVLTAGPRPAELSPDDTYLLVGGVGGIGKSLCQLLVDRGARNLLVLSRNAARITPETQQWLDVLQATGARVVLESCDVTQRAQLQAVFEKYSSELPPIRGVIQAAMVLKDGIFESMTHEDYLAALKPKVQGTFNLHTLLPTDLRFFILLSSISGFGGNAGQANYAAGGSYQDALARHRAGRGLPAVSIDLGMVSSVGVVAGTQHVADHLEKLGLRAVSEQEVWALVESAIRHPIRTPETCHIVTGLPGGFVRSDSPVCWNRDARFAILEQKDFSSSGLASTSNPGAGLKERLSAVTTPAEVTTLIQSALITKLAEMFSRSPEEIDPSLPLAHFGVDSLVAVELRNWSVATVQADCSIFDVMHAVSVTGLAGQMAKKSRFVKL.

The Ketosynthase family 3 (KS3) domain maps to 20–445 (VMPIAIIGMA…GANAHVIVES (426 aa)). Residues Cys-193, His-328, and His-368 each act as for beta-ketoacyl synthase activity in the active site. Residues 560-882 (VFTGQGAQWF…TYASCLSRGQ (323 aa)) are malonyl-CoA:ACP transacylase (MAT) domain. The segment at 951–1086 (HDLLGVPAAG…GLCCTPSPAQ (136 aa)) is N-terminal hotdog fold. The interval 951-1243 (HDLLGVPAAG…SVRVINNAGT (293 aa)) is dehydratase (DH) domain. Positions 951-1270 (HDLLGVPAAG…CQSLGSSAVV (320 aa)) constitute a PKS/mFAS DH domain. His-983 functions as the Proton acceptor; for dehydratase activity in the catalytic mechanism. Residues 1108–1270 (AWRILNPADT…CQSLGSSAVV (163 aa)) form a C-terminal hotdog fold region. Asp-1174 functions as the Proton donor; for dehydratase activity in the catalytic mechanism. The methyltransferase (CMet) domain stretch occupies residues 1406-1587 (EDQAEWSSVS…RLLAKAGFEP (182 aa)). The enoyl reductase (ER) (ER) domain stretch occupies residues 1823-2137 (GLLNSLVFTE…TGKHMGKIVL (315 aa)). Positions 2162 to 2339 (TYLLVGGVGG…AVSIDLGMVS (178 aa)) are ketoreductase (KR) domain. The region spanning 2445–2522 (EVTTLIQSAL…GLAGQMAKKS (78 aa)) is the Carrier domain. Residue Ser-2482 is modified to O-(pantetheine 4'-phosphoryl)serine.

The protein operates within secondary metabolite biosynthesis. Highly reducing polyketide synthase; part of the gene cluster that mediates the biosynthesis of oxaleimides, cytotoxic compounds containing an unusual disubstituted succinimide moiety. The first step of the pathway is provided by the HR-PKS poxF that serves in a new mode of collaborative biosynthesis with the PKS-NRPS poxE, by providing the olefin containing amino acid substrate via the synthesis of an ACP-bound dec-4-enoate. The cytochrome P450 monooxygenase poxM-catalyzed oxidation at the alpha-position creates the enzyme-bound 2-hydroxydec-4-enoyl-ACP thioester, which may be prone to spontaneous hydrolysis to yield 2-hydroxydec-4-enoic acid due to increased electrophilicity of the carbonyl. 2-hydroxydec-4-enoic acid can then be further oxidized by poxM to yield the alpha-ketoacid 2-oxodec-4-enoicacid, which is reductively aminated by the aminotransferase poxL to yield (S,E)-2-aminodec-4-enoic acid. The Hybrid PKS-NRPS synthetase poxE then performs condensation between the octaketide product of its PKS modules and the amino group of (S,E)-2-aminodec-4-enoic acid which is activated and incorporated by the adenylation domain. The resulting aminoacyl product can be cyclized by the Diels-Alderase PoxQ and reductively released by the reductive (R) domain of poxE to yield an aldehyde intermediate. The released aldehyde is then substrate for a Knoevenagel condensation by the hydrolyase poxO followed by an oxidation at the 5-position of the pyrrolidone ring. The presence of the olefin from the amino acid building block allows for migration of the substituted allyl group to occur. This allylic transposition reaction takes place in a conjugate addition, semipinacol-like fashion to yield a succinimide intermediate. Iterative two-electron oxidations of the C7 methyl of the succinimide intermediate to the carboxylic acid can be catalyzed by one of two remaining cytochrome P450 monooxygenasess poxC or poxD to yield oxaleimide A. Subsequent oxidation yields the maleimide scaffold oxaleimide I. Both oxaleimide A and oxaleimide I can undergo oxidative modifications in the decalin ring to yield the series of products oxaleimides B to H. In Penicillium oxalicum, this protein is Highly reducing polyketide synthase poxF.